We begin with the raw amino-acid sequence, 658 residues long: Alkyldihydroxyacetonephosphate synthase, peroxisomal (658 aa).

Low complexity predominate over residues 1–24; that stretch reads MAEAAAAAAAAAAAGETSASSGSA. A disordered region spans residues 1–37; the sequence is MAEAAAAAAAAAAAGETSASSGSAAERDPDQDRAGRR. A peroxisome-targeting transit peptide spans 1–58; the sequence is MAEAAAAAAAAAAAGETSASSGSAAERDPDQDRAGRRLRVLSGHLLGRPQEALSTNEC. Over residues 25 to 35 the composition is skewed to basic and acidic residues; it reads AERDPDQDRAG. Serine 65 carries the phosphoserine modification. Threonine 74 is subject to Phosphothreonine. At lysine 102 the chain carries N6-acetyllysine. Residues 202 to 384 enclose the FAD-binding PCMH-type domain; it reads FERIPDIVLW…TEATIKIRPT (183 aa). FAD is bound by residues 234–240, 303–309, and 316–319; these read PIGGGTS, DSLEFST, and TRAS. Lysine 347 carries the N6-acetyllysine modification. 368–374 provides a ligand contact to FAD; it reads EGTLGVI. Arginine 515 is a binding site for substrate. Tyrosine 578 acts as the Proton donor/acceptor in catalysis. Important for enzyme activity regions lie at residues 615–617 and 654–658; these read HHH and NRNLL.

This sequence belongs to the FAD-binding oxidoreductase/transferase type 4 family. In terms of assembly, homodimer. It depends on FAD as a cofactor.

The protein resides in the peroxisome membrane. Its subcellular location is the peroxisome. It carries out the reaction a long chain fatty alcohol + a 1-acylglycerone 3-phosphate = a 1-O-alkylglycerone 3-phosphate + a long-chain fatty acid + H(+). It catalyses the reaction hexadecan-1-ol + 1-hexadecanoylglycerone 3-phosphate = 1-O-hexadecylglycerone 3-phosphate + hexadecanoate + H(+). The enzyme catalyses 1-hexadecanoylglycerone 3-phosphate + a long-chain fatty acid = a 1-acylglycerone 3-phosphate + hexadecanoate. Its pathway is glycerolipid metabolism; ether lipid biosynthesis. With respect to regulation, inhibited by N-ethylmaleimide, p-bromophenacylbromide, 2,4- dinitrofluorobenzene and divalent cations such as such as Mn(2+), Mg(2+) and Zn(2+). Inhibition by p-bromophenacylbromide is strongly pH dependent and is highest at alkaline conditions. In terms of biological role, catalyzes the exchange of the acyl chain in acyl-dihydroxyacetonephosphate (acyl-DHAP) for a long chain fatty alcohol, yielding the first ether linked intermediate, i.e. alkyl-dihydroxyacetonephosphate (alkyl-DHAP), in the pathway of ether lipid biosynthesis. This Cavia porcellus (Guinea pig) protein is Alkyldihydroxyacetonephosphate synthase, peroxisomal (AGPS).